The chain runs to 158 residues: MSKKPKVASNTIALNKRARHEYFIEEEIEAGLELQGWEVKSLRAGKANIGDSYVTFRNGEAFLFGGTITPLNVASTHIVCDPTRTRKLLLNKRELDTLYGKVSRDGFTVVALSLYWKNAWAKVKIGLAKGKKLHDKREDIKDREWQVAKQRIMKNANR.

It belongs to the SmpB family.

It localises to the cytoplasm. In terms of biological role, required for rescue of stalled ribosomes mediated by trans-translation. Binds to transfer-messenger RNA (tmRNA), required for stable association of tmRNA with ribosomes. tmRNA and SmpB together mimic tRNA shape, replacing the anticodon stem-loop with SmpB. tmRNA is encoded by the ssrA gene; the 2 termini fold to resemble tRNA(Ala) and it encodes a 'tag peptide', a short internal open reading frame. During trans-translation Ala-aminoacylated tmRNA acts like a tRNA, entering the A-site of stalled ribosomes, displacing the stalled mRNA. The ribosome then switches to translate the ORF on the tmRNA; the nascent peptide is terminated with the 'tag peptide' encoded by the tmRNA and targeted for degradation. The ribosome is freed to recommence translation, which seems to be the essential function of trans-translation. This chain is SsrA-binding protein, found in Glaesserella parasuis serovar 5 (strain SH0165) (Haemophilus parasuis).